A 578-amino-acid polypeptide reads, in one-letter code: Putative transporter B0361.11 (578 aa).

The segment at Met1 to Arg30 is disordered. A run of 11 helical transmembrane segments spans residues Ile51–Met71, Phe148–Ala168, Ile182–Ile202, Ala232–Val252, Tyr263–Ser283, Ile339–Ile359, Ala373–Met393, Met399–Leu419, Leu426–Trp446, Ser457–Val477, and Trp486–Leu506. Residues Ala532–Ser550 show a composition bias toward low complexity. Residues Ala532–Ser561 form a disordered region.

This sequence belongs to the major facilitator superfamily. Sugar transporter (TC 2.A.1.1) family.

It localises to the membrane. The sequence is that of Putative transporter B0361.11 from Caenorhabditis elegans.